Here is a 620-residue protein sequence, read N- to C-terminus: Cilia- and flagella-associated protein 52 (620 aa).

WD repeat units lie at residues 62 to 106, 109 to 150, 156 to 195, 288 to 327, 330 to 369, 372 to 411, 415 to 454, 459 to 498, 500 to 541, 543 to 582, and 585 to 620; these read GHGN…LIAR, LHKG…AICG, LNVG…RKIW, QLQG…ETLI, CHFE…ELLR, VPNM…LMYT, AHRI…QKLE, EHKS…RNQM, LANT…RELE, SLSG…VTHV, and GHSG…PFAS.

This sequence belongs to the CFAP52 family. As to quaternary structure, microtubule inner protein component of sperm flagellar doublet microtubules. Interacts with BRCA2. Interacts with the CCT chaperonin complex. Interacts with HSP70. Interacts with AK8. Interacts with CFAP45. Interacts with DNAI1. Interacts with IQDC.

It localises to the cytoplasm. Its subcellular location is the cytoskeleton. The protein localises to the cilium axoneme. It is found in the flagellum axoneme. Its function is as follows. Microtubule inner protein (MIP) part of the dynein-decorated doublet microtubules (DMTs) in cilia axoneme. Important for proper ciliary and flagellar beating. May act in cooperation with CFAP45 and axonemal dynein subunit DNAH11. May play a role in cell growth and/or survival. This Mus musculus (Mouse) protein is Cilia- and flagella-associated protein 52.